We begin with the raw amino-acid sequence, 823 residues long: Putative ankyrin repeat domain-containing protein 20A3 (823 aa).

ANK repeat units lie at residues 66 to 95 (QHRTALHLACASGHVQVVTLLVNRKCQIDV), 99 to 128 (ENRTPLIQAVHCQEEACAVILLEHGANPNL), 132 to 161 (YGNTALHYAVYSESTSLAEKLLSHGAHIEA), 165 to 194 (DNNTPLLFAIICKKEKMVEFLLKRKASSHA), and 198 to 227 (LRRSALMLAVYYDSPGIVNILLKQNIDVFA). Disordered regions lie at residues 301-343 (VPEK…EVED) and 355-402 (VQTL…LSEN). Basic and acidic residues predominate over residues 372–384 (QERHERSEKKQPQ). Coiled coils occupy residues 431–480 (KKLK…KQLE), 571–724 (AFRY…NNST), and 776–805 (LVLEEKSKKLMNECDHLKESLFQYEREKTE).

The protein is Putative ankyrin repeat domain-containing protein 20A3 of Homo sapiens (Human).